The chain runs to 596 residues: Proteasome-associated ATPase (596 aa).

Residues 12 to 94 (SRWERETQDL…KEEIDRLAQP (83 aa)) adopt a coiled-coil conformation. 280–285 (GCGKTL) is a binding site for ATP. A docks into pockets in the proteasome alpha-ring region spans residues 595–596 (YL).

It belongs to the AAA ATPase family. In terms of assembly, homohexamer. Assembles into a hexameric ring structure that caps the 20S proteasome core. Strongly interacts with the prokaryotic ubiquitin-like protein Pup through a hydrophobic interface; the interacting region of ARC lies in its N-terminal coiled-coil domain. There is one Pup binding site per ARC hexamer ring. Upon ATP-binding, the C-terminus of ARC interacts with the alpha-rings of the proteasome core, possibly by binding to the intersubunit pockets.

The protein operates within protein degradation; proteasomal Pup-dependent pathway. Its function is as follows. ATPase which is responsible for recognizing, binding, unfolding and translocation of pupylated proteins into the bacterial 20S proteasome core particle. May be essential for opening the gate of the 20S proteasome via an interaction with its C-terminus, thereby allowing substrate entry and access to the site of proteolysis. Thus, the C-termini of the proteasomal ATPase may function like a 'key in a lock' to induce gate opening and therefore regulate proteolysis. This is Proteasome-associated ATPase from Stackebrandtia nassauensis (strain DSM 44728 / CIP 108903 / NRRL B-16338 / NBRC 102104 / LLR-40K-21).